Consider the following 341-residue polypeptide: Serpentine receptor class beta-1 (341 aa).

A run of 7 helical transmembrane segments spans residues Ala22–Leu42, Phe66–Ile86, Gly102–Ile122, Leu141–Phe161, Cys188–Val208, Leu240–Ile260, and Gly279–Leu299.

Belongs to the nematode receptor-like protein srb family.

The protein localises to the membrane. The sequence is that of Serpentine receptor class beta-1 (srb-1) from Caenorhabditis elegans.